The chain runs to 160 residues: Protransforming growth factor alpha (160 aa).

Residues 1 to 23 (MVPSAGQLALFALGIVLAACQAL) form the signal peptide. A propeptide spans 24 to 39 (ENSTSPLSADPPVAAA) (removed in mature form). Residues 24–98 (ENSTSPLSAD…AVVAASQKKQ (75 aa)) lie on the Extracellular side of the membrane. N-linked (GlcNAc...) asparagine glycosylation is present at asparagine 25. The EGF-like domain occupies 43–83 (HFNDCPDSHTQFCFHGTCRFLVQEDKPACVCHSGYVGARCE). Cystine bridges form between cysteine 47–cysteine 60, cysteine 55–cysteine 71, and cysteine 73–cysteine 82. Positions 90-160 (VVAASQKKQA…TACCHSETVV (71 aa)) are cleaved as a propeptide — removed in mature form. The helical transmembrane segment at 99–124 (AITALVVVSIVALAVLIITCVLIHCC) threads the bilayer. Residues 125–160 (QVRKHCEWCRALICRHEKPSALLKGRTACCHSETVV) lie on the Cytoplasmic side of the membrane. Residues cysteine 153 and cysteine 154 are each lipidated (S-palmitoyl cysteine).

Interacts with the PDZ domains of MAGI3, SDCBP and SNTA1. The interaction with SDCBP, is required for the targeting to the cell surface. In the endoplasmic reticulum, in its immature form (i.e. with a prosegment and lacking full N-glycosylation), interacts with CNIH. In the Golgi apparatus, may form a complex with CNIH and GORASP2. Interacts (via cytoplasmic C-terminal domain) with NKD2. In terms of tissue distribution, isoform 1, isoform 3 and isoform 4 are expressed in keratinocytes and tumor-derived cell lines.

It is found in the secreted. The protein resides in the extracellular space. It localises to the cell membrane. TGF alpha is a mitogenic polypeptide that is able to bind to the EGF receptor/EGFR and to act synergistically with TGF beta to promote anchorage-independent cell proliferation in soft agar. This Homo sapiens (Human) protein is Protransforming growth factor alpha (TGFA).